The chain runs to 414 residues: GLABROUS1 enhancer-binding protein-like 3 (414 aa).

2 disordered regions span residues 36–57 (QLRTTTTRTTTTRTTPLSLSSS) and 167–191 (QAKDVPSGEPETNDVPCEEQDDRDV). The segment covering 38–50 (RTTTTRTTTTRTT) has biased composition (low complexity). The segment at 382–403 (LINEWKALFVDEQRLCVKKLTF) is non-canonical leucine-zipper.

Belongs to the GeBP family. In terms of assembly, homo- and heterodimers. Interacts with GEBP, GPL1 and GPL2. Interacts with GEBP. Expressed in the apical meristem and young leaf primordia. Detected in the vascular tissues of rosette leaves, in primary and secondary roots and at the base of flowers and siliques.

It localises to the nucleus. Its function is as follows. Probable transcription factor. Involved in stress responses. Plays a repressive role in cell expansion by counteracting the positive role of CPR5 in this process, but does not regulate cell proliferation or endoreduplication. This is GLABROUS1 enhancer-binding protein-like 3 from Arabidopsis thaliana (Mouse-ear cress).